Reading from the N-terminus, the 441-residue chain is Proline--tRNA ligase (441 aa).

Belongs to the class-II aminoacyl-tRNA synthetase family. ProS type 2 subfamily. As to quaternary structure, homodimer.

It is found in the cytoplasm. The catalysed reaction is tRNA(Pro) + L-proline + ATP = L-prolyl-tRNA(Pro) + AMP + diphosphate. Functionally, catalyzes the attachment of proline to tRNA(Pro) in a two-step reaction: proline is first activated by ATP to form Pro-AMP and then transferred to the acceptor end of tRNA(Pro). The protein is Proline--tRNA ligase of Bartonella henselae (strain ATCC 49882 / DSM 28221 / CCUG 30454 / Houston 1) (Rochalimaea henselae).